The following is a 233-amino-acid chain: Ribosomal RNA small subunit methyltransferase G (233 aa).

S-adenosyl-L-methionine is bound by residues glycine 91, methionine 96, valine 142 to glutamate 143, and arginine 157.

Belongs to the methyltransferase superfamily. RNA methyltransferase RsmG family.

It localises to the cytoplasm. It carries out the reaction guanosine(527) in 16S rRNA + S-adenosyl-L-methionine = N(7)-methylguanosine(527) in 16S rRNA + S-adenosyl-L-homocysteine. Its function is as follows. Specifically methylates the N7 position of guanine in position 527 of 16S rRNA. In Cupriavidus necator (strain ATCC 17699 / DSM 428 / KCTC 22496 / NCIMB 10442 / H16 / Stanier 337) (Ralstonia eutropha), this protein is Ribosomal RNA small subunit methyltransferase G.